We begin with the raw amino-acid sequence, 505 residues long: Pentatricopeptide repeat-containing protein At2g17033 (505 aa).

PPR repeat units lie at residues 243 to 277 (KTQA…KIKP), 278 to 312 (GLFE…GHKI), and 313 to 347 (DTVC…NVPF). The 91-residue stretch at 413-503 (LDLHGMHLSS…AKGKTVKEWL (91 aa)) folds into the Smr domain.

It belongs to the PPR family. P subfamily.

This Arabidopsis thaliana (Mouse-ear cress) protein is Pentatricopeptide repeat-containing protein At2g17033.